The chain runs to 449 residues: Interferon-related developmental regulator 1 (449 aa).

The segment covering Met-1–Pro-10 has biased composition (basic residues). Positions Met-1–Glu-42 are disordered. Residues Arg-12 to Gly-21 show a composition bias toward gly residues. The span at Ala-22–Gly-31 shows a compositional bias: low complexity.

The protein belongs to the IFRD family. In terms of assembly, interacts with PSIP1/LEDGF.

Its function is as follows. Could play a role in regulating gene activity in the proliferative and/or differentiative pathways induced by NGF. May be an autocrine factor that attenuates or amplifies the initial ligand-induced signal. The chain is Interferon-related developmental regulator 1 (Ifrd1) from Mus musculus (Mouse).